The primary structure comprises 128 residues: Small ribosomal subunit protein uS9 (128 aa).

The protein belongs to the universal ribosomal protein uS9 family.

This Cytophaga hutchinsonii (strain ATCC 33406 / DSM 1761 / CIP 103989 / NBRC 15051 / NCIMB 9469 / D465) protein is Small ribosomal subunit protein uS9.